Reading from the N-terminus, the 415-residue chain is F-box protein At3g13820 (415 aa).

The F-box domain occupies Met-1–Gln-50. 2 disordered regions span residues Asn-209–Asp-229 and Lys-387–Gly-415. Acidic residues predominate over residues Asp-210–Asp-229. The span at Asn-403–Gly-415 shows a compositional bias: basic residues.

The chain is F-box protein At3g13820 from Arabidopsis thaliana (Mouse-ear cress).